The sequence spans 274 residues: Diaminopimelate epimerase (274 aa).

Asparagine 11, glutamine 44, and asparagine 64 together coordinate substrate. Catalysis depends on cysteine 73, which acts as the Proton donor. Substrate is bound by residues 74–75 (GN), asparagine 157, asparagine 190, and 208–209 (ER). Cysteine 217 acts as the Proton acceptor in catalysis. 218-219 (GS) serves as a coordination point for substrate.

It belongs to the diaminopimelate epimerase family. In terms of assembly, homodimer.

The protein resides in the cytoplasm. The enzyme catalyses (2S,6S)-2,6-diaminopimelate = meso-2,6-diaminopimelate. It functions in the pathway amino-acid biosynthesis; L-lysine biosynthesis via DAP pathway; DL-2,6-diaminopimelate from LL-2,6-diaminopimelate: step 1/1. Its function is as follows. Catalyzes the stereoinversion of LL-2,6-diaminopimelate (L,L-DAP) to meso-diaminopimelate (meso-DAP), a precursor of L-lysine and an essential component of the bacterial peptidoglycan. This is Diaminopimelate epimerase from Serratia proteamaculans (strain 568).